Here is a 3914-residue protein sequence, read N- to C-terminus: Trichosetin synthetase PKS-NRPS1 (3914 aa).

Residues asparagine 4–alanine 420 enclose the Ketosynthase family 3 (KS3) domain. Active-site for beta-ketoacyl synthase activity residues include cysteine 177, histidine 301, and histidine 340. A malonyl-CoA:ACP transacylase (MAT) domain region spans residues valine 525–alanine 847. Positions histidine 913–proline 1047 are N-terminal hotdog fold. The tract at residues histidine 913 to threonine 1214 is dehydratase (DH) domain. A PKS/mFAS DH domain is found at histidine 913–glutamate 1216. The active-site Proton acceptor; for dehydratase activity is the histidine 946. Positions leucine 1062–glutamate 1216 are C-terminal hotdog fold. Aspartate 1122 serves as the catalytic Proton donor; for dehydratase activity. The methyltransferase (MT) domain stretch occupies residues glutamate 1364–leucine 1593. The tract at residues threonine 2083 to serine 2255 is ketoreductase (KR) domain. The Carrier 1 domain maps to leucine 2356–isoleucine 2436. Position 2396 is an O-(pantetheine 4'-phosphoryl)serine (serine 2396). The segment at glutamate 2447 to lysine 2518 is disordered. Polar residues predominate over residues glutamine 2481–glutamate 2500. Residues serine 2529–threonine 2956 are condensation (C) domain. The segment at glutamine 2991–aspartate 3388 is adenylation (A) (KR) domain. One can recognise a Carrier 2 domain in the interval glycine 3502–glycine 3579. The residue at position 3539 (serine 3539) is an O-(pantetheine 4'-phosphoryl)serine. Residues leucine 3615 to alanine 3831 are reductase (RED) domain.

In the C-terminal section; belongs to the NRP synthetase family.

It catalyses the reaction L-serine + 7 malonyl-CoA + acetyl-CoA + 2 S-adenosyl-L-methionine + ATP + 8 NADPH + 11 H(+) = (5S)-3-[(2E,6R,8E,10E,12E)-2,6-dimethyltetradeca-2,8,10,12-tetraenoyl]-5-(hydroxymethyl)pyrrolidine-2,4-dione + AMP + 2 S-adenosyl-L-homocysteine + 7 CO2 + diphosphate + 8 NADP(+) + 8 CoA + 6 H2O. The protein operates within mycotoxin biosynthesis. In terms of biological role, hybrid PKS-NRPS synthetase; part of the gene cluster that mediates the biosynthesis of trichosetin, a trans-fused decalin-containing tetramic acid with antimicrobial activity. The PKS module of PKS-NRPS1 together with the enoylreductase (ER) catalyze the formation of the polyketide unit which is then conjugated to L-serine by the condensation domain of the PKS-NRPS1 NRPS module. Activity of the Dieckmann cyclase domain (RED) results in release of the Dieckmann product intermediate. Diels-Alderase (DA) is involved in endo-selective Diels-Alder cycloaddition to form the decalin ring, leading to the production of N-desmethylequisetin also called trichosetin. The cluster does not contain the equisetin N-methyltransferase and consequently, trichosetin is isolated as final product. In Gibberella fujikuroi (strain CBS 195.34 / IMI 58289 / NRRL A-6831) (Bakanae and foot rot disease fungus), this protein is Trichosetin synthetase PKS-NRPS1.